Here is a 764-residue protein sequence, read N- to C-terminus: MSSPRAAPSHDTFPNAKRRKVRKGTHSCWECKRRKMKCIFDPRITSTSCNGCRQRGSPCISQEFVQDDSHVAHGANDSASLDASTPIATPSDDARRADHDILTPVSVDSEPYRYLPSSKSSDKRFTTRSSNDASTCPMKHEKLSKYLHEALPSREDTERICKASRHSSILAHELLTVPYDTLYRNGLKTPDSLLAIPEPHVHPVLIAKHMLQLATFLQHLHPDLDKEIKVLSESPRAIMQRLVDIAIHHITTNNELLGSVESLECVMIESLYQANIGNLRKSWVAGRRAMSIAQLMGLHRSDSLSQYKVLDPKTEYNPQLMWLRIVTLDRHLCLLLGLPQGCTDRSMASETCLSNDTQMGRLERLHCVLMSRILERNEYSTNAQHAVVTREIDLELQKAARGLTSKWWLAPKLNTASADLQVHFWDTRRLLAQIFHYNLLIQLHLPYMLRVSSDESKHDYSRMTCVNASREVLSRYITLRNLNRIAYSCRTVDFIALMAAMALLLAHMNCHRAGAVNPLAHQYLSDRAMIEQVQENMHEINKLNSDALSAQSADLLKKLLAIEMEAGDTRVSVSEASNGVVQQDGTTREEDGVVSVQVPYFGIIRIGKDTPTKNQASVTATMHGTAPLHLDRFPTSINTNSDPVHVHSQADFPSSTQLSSSSHPNTPSPALSLNNIPFHATCMAALPDSSVVFTRQQHQKQQQEHQEFGGDLATVSDTSFPSSLHATWQDNFPELAAGSEDWAFQGVDMAFFESIMRSDTNLGQ.

The zn(2)-C6 fungal-type DNA-binding region spans 28–59 (CWECKRRKMKCIFDPRITSTSCNGCRQRGSPC). Disordered regions lie at residues 73–94 (HGAN…SDDA), 112–136 (YRYL…ASTC), and 633–672 (FPTS…PALS). Residues 77-88 (DSASLDASTPIA) show a composition bias toward polar residues. Residues 663-672 (HPNTPSPALS) show a composition bias toward polar residues.

It localises to the nucleus. Transcription factor involved in regulation of the dehydrocurvularin biosynthesis gene cluster. The sequence is that of Dehydrocurvularin biosynthesis regulator from Alternaria cinerariae.